The sequence spans 58 residues: Putative antitoxin VapB16 (58 aa).

Putative antitoxin component of a possible type II toxin-antitoxin (TA) system. The cognate toxin is VapC16. The sequence is that of Putative antitoxin VapB16 (vapB16) from Mycobacterium tuberculosis (strain ATCC 25618 / H37Rv).